Consider the following 108-residue polypeptide: Evasin P1229 (108 aa).

The first 31 residues, 1–31 (MEVRTFAFLQIVVFVALGIQLFAAVTDAADA), serve as a signal peptide directing secretion. 3 disulfide bridges follow: Cys-41-Cys-63, Cys-45-Cys-65, and Cys-56-Cys-76. The N-linked (GlcNAc...) asparagine glycan is linked to Asn-44. Positions 88-108 (GDPNNSDLDAATPRHPDASSR) are disordered. Asn-91 carries an N-linked (GlcNAc...) asparagine glycan. The segment covering 99 to 108 (TPRHPDASSR) has biased composition (basic and acidic residues).

The protein resides in the secreted. Salivary chemokine-binding protein which binds to host chemokines CXCL1 and CXCL8. The chain is Evasin P1229 from Ixodes ricinus (Common tick).